A 423-amino-acid chain; its full sequence is UPF0229 protein Pmen_4018 (423 aa).

The interval 65–108 (HHGRGGKQTIVHPGNKEFTAGERIPRPQGGGGGRGSGKASNSGE) is disordered.

Belongs to the UPF0229 family.

The chain is UPF0229 protein Pmen_4018 from Ectopseudomonas mendocina (strain ymp) (Pseudomonas mendocina).